The primary structure comprises 262 residues: tRNA pseudouridine synthase A (262 aa).

Asp-52 (nucleophile) is an active-site residue. Tyr-110 lines the substrate pocket.

This sequence belongs to the tRNA pseudouridine synthase TruA family. In terms of assembly, homodimer.

The catalysed reaction is uridine(38/39/40) in tRNA = pseudouridine(38/39/40) in tRNA. Functionally, formation of pseudouridine at positions 38, 39 and 40 in the anticodon stem and loop of transfer RNAs. The polypeptide is tRNA pseudouridine synthase A (Hydrogenovibrio crunogenus (strain DSM 25203 / XCL-2) (Thiomicrospira crunogena)).